The following is a 72-amino-acid chain: Lantibiotic lichenicidin VK21 A2 (72 aa).

Residues Met-1–Gly-21 form a disordered region. The propeptide occupies Met-1–Glu-40. The residue at position 41 (Thr-41) is a 2-oxobutanoic acid. (Z)-2,3-didehydrobutyrine is present on residues Thr-42, Thr-45, and Thr-46. The segment at residues Ser-47 to Cys-51 is a cross-link (lanthionine (Ser-Cys)). Ser-48 is modified (2,3-didehydroalanine (Ser)). 2 positions are modified to (Z)-2,3-didehydrobutyrine: Thr-53 and Thr-57. Positions Ser-59–Cys-63 form a cross-link, lanthionine (Ser-Cys). 2 consecutive cross-links (beta-methyllanthionine (Thr-Cys)) follow at residues Thr-65–Cys-68 and Thr-69–Cys-72. (Z)-2,3-didehydrobutyrine is present on Thr-66.

In terms of processing, maturation of lantibiotics involves the enzymatic conversion of Thr, and Ser into dehydrated AA and the formation of thioether bonds with cysteine. This is followed by membrane translocation and cleavage of the modified precursor. The 2,3-didehydrobutyrines are determined to be the Z-isomers.

Its subcellular location is the secreted. Its function is as follows. Lanthionine-containing peptide antibiotic (lantibiotic) active on Gram-positive bacteria. The bactericidal activity of lantibiotics is based on depolarization of energized bacterial cytoplasmic membranes, initiated by the formation of aqueous transmembrane pores. When present individually, LchA2 exhibits activity towards B.subtilis L1 (IC(50)=30 uM), Rhodococcus sp. SS2 (IC(50)=16.6 uM), M.luteus B1314 (IC(50)=2.6 uM), B.megaterium VKM41 (IC(50)=2 uM), S.aureus 209p (IC(50)=20 uM), B.pumilus 2001, B.globigii I, B.amyloliquefaciens I, M.smegmatis 1171 and M.phlei 1291. However, when combined with LchA1, it displays much stronger activity against B.subtilis L1 (IC(50)=0.64 uM), Rhodococcus sp. SS2 (IC(50)=0.64 uM), M.luteus B1314 (IC(50)=0.09 uM), B.megaterium VKM41 (IC(50)=0.12 uM) and S.aureus 209p (IC(50)=0.64 uM). The activity of the combined LchA1 and LchA2 peptides is strongest at a molar ratio of 1. Even when applied at 17-fold concentration of the highest IC(50) values for Gram-positive bacteria, neither the individual nor the combined peptides display activity against Gram-negative bacteria P.aeruginosa PAO1, P.putida I-97 or E.coli C600. This is Lantibiotic lichenicidin VK21 A2 from Bacillus licheniformis.